Reading from the N-terminus, the 317-residue chain is MKTWQELTITVHRDAEEAVSNMLIEAGSQGVAISDSADYLGQPDRFGEIFPDVTQDDMITITGYFPESFAITEVTASLEKQVATLKSTGLETGPVSIASHELEEEDWAENWKKYYEPARITHDLTIVPSWTDYDAKPEEKVIKLDPGMAFGTGTHPTTKMSLFALEQVLRGGETVIDVGTGSGVLSIASSLLGAKEIYAYDLDDVAVRVAQENIDLNANTENIHVAAGDLLKGVTIQADVIVANILADILIHLTDDAYRLVKDEGYLIMSGIISEKWPMVRASAEKAGFFLETHMIQGEWNACVFKKTDDMSGVIGG.

S-adenosyl-L-methionine is bound by residues threonine 158, glycine 179, aspartate 201, and asparagine 244.

This sequence belongs to the methyltransferase superfamily. PrmA family.

It localises to the cytoplasm. It catalyses the reaction L-lysyl-[protein] + 3 S-adenosyl-L-methionine = N(6),N(6),N(6)-trimethyl-L-lysyl-[protein] + 3 S-adenosyl-L-homocysteine + 3 H(+). Methylates ribosomal protein L11. This is Ribosomal protein L11 methyltransferase from Streptococcus uberis (strain ATCC BAA-854 / 0140J).